We begin with the raw amino-acid sequence, 327 residues long: Lipoyl synthase (327 aa).

[4Fe-4S] cluster is bound by residues cysteine 72, cysteine 77, cysteine 83, cysteine 98, cysteine 102, cysteine 105, and serine 313. The region spanning 83 to 302 (CWSHGTATIM…RKVGLEKGFL (220 aa)) is the Radical SAM core domain.

It belongs to the radical SAM superfamily. Lipoyl synthase family. It depends on [4Fe-4S] cluster as a cofactor.

It localises to the cytoplasm. It carries out the reaction [[Fe-S] cluster scaffold protein carrying a second [4Fe-4S](2+) cluster] + N(6)-octanoyl-L-lysyl-[protein] + 2 oxidized [2Fe-2S]-[ferredoxin] + 2 S-adenosyl-L-methionine + 4 H(+) = [[Fe-S] cluster scaffold protein] + N(6)-[(R)-dihydrolipoyl]-L-lysyl-[protein] + 4 Fe(3+) + 2 hydrogen sulfide + 2 5'-deoxyadenosine + 2 L-methionine + 2 reduced [2Fe-2S]-[ferredoxin]. Its pathway is protein modification; protein lipoylation via endogenous pathway; protein N(6)-(lipoyl)lysine from octanoyl-[acyl-carrier-protein]: step 2/2. In terms of biological role, catalyzes the radical-mediated insertion of two sulfur atoms into the C-6 and C-8 positions of the octanoyl moiety bound to the lipoyl domains of lipoate-dependent enzymes, thereby converting the octanoylated domains into lipoylated derivatives. This chain is Lipoyl synthase, found in Francisella tularensis subsp. holarctica (strain FTNF002-00 / FTA).